Here is a 90-residue protein sequence, read N- to C-terminus: Small ribosomal subunit protein bS20 (90 aa).

The segment at 1 to 27 (MANSAQAKKRARQNEKRELHNASQRSA) is disordered.

It belongs to the bacterial ribosomal protein bS20 family.

In terms of biological role, binds directly to 16S ribosomal RNA. The chain is Small ribosomal subunit protein bS20 from Coxiella burnetii (strain CbuK_Q154) (Coxiella burnetii (strain Q154)).